The primary structure comprises 114 residues: Iron-sulfur cluster insertion protein ErpA (114 aa).

The iron-sulfur cluster site is built by Cys-42, Cys-106, and Cys-108.

The protein belongs to the HesB/IscA family. Homodimer. It depends on iron-sulfur cluster as a cofactor.

Required for insertion of 4Fe-4S clusters for at least IspG. The sequence is that of Iron-sulfur cluster insertion protein ErpA from Citrobacter koseri (strain ATCC BAA-895 / CDC 4225-83 / SGSC4696).